We begin with the raw amino-acid sequence, 105 residues long: uncharacterized protein (105 aa).

This sequence to C.jejuni CJ1463.

This is an uncharacterized protein from Helicobacter pylori (strain ATCC 700392 / 26695) (Campylobacter pylori).